A 147-amino-acid chain; its full sequence is uncharacterized protein (147 aa).

Low complexity predominate over residues 72 to 81 (ARAKPASRAP). The interval 72-147 (ARAKPASRAP…QGAAGRRLSP (76 aa)) is disordered.

This is an uncharacterized protein from Homo sapiens (Human).